Reading from the N-terminus, the 153-residue chain is Ribosome maturation factor RimP (153 aa).

This sequence belongs to the RimP family.

It is found in the cytoplasm. Functionally, required for maturation of 30S ribosomal subunits. The protein is Ribosome maturation factor RimP of Clostridium botulinum (strain Okra / Type B1).